Consider the following 358-residue polypeptide: Histidinol-phosphate aminotransferase (358 aa).

The residue at position 211 (Lys211) is an N6-(pyridoxal phosphate)lysine.

It belongs to the class-II pyridoxal-phosphate-dependent aminotransferase family. Histidinol-phosphate aminotransferase subfamily. In terms of assembly, homodimer. Pyridoxal 5'-phosphate serves as cofactor.

The enzyme catalyses L-histidinol phosphate + 2-oxoglutarate = 3-(imidazol-4-yl)-2-oxopropyl phosphate + L-glutamate. It functions in the pathway amino-acid biosynthesis; L-histidine biosynthesis; L-histidine from 5-phospho-alpha-D-ribose 1-diphosphate: step 7/9. In Blochmanniella pennsylvanica (strain BPEN), this protein is Histidinol-phosphate aminotransferase.